A 157-amino-acid polypeptide reads, in one-letter code: 2-amino-4-hydroxy-6-hydroxymethyldihydropteridine pyrophosphokinase (157 aa).

It belongs to the HPPK family.

It catalyses the reaction 6-hydroxymethyl-7,8-dihydropterin + ATP = (7,8-dihydropterin-6-yl)methyl diphosphate + AMP + H(+). The protein operates within cofactor biosynthesis; tetrahydrofolate biosynthesis; 2-amino-4-hydroxy-6-hydroxymethyl-7,8-dihydropteridine diphosphate from 7,8-dihydroneopterin triphosphate: step 4/4. Catalyzes the transfer of pyrophosphate from adenosine triphosphate (ATP) to 6-hydroxymethyl-7,8-dihydropterin, an enzymatic step in folate biosynthesis pathway. The sequence is that of 2-amino-4-hydroxy-6-hydroxymethyldihydropteridine pyrophosphokinase (folK) from Campylobacter jejuni subsp. jejuni serotype O:2 (strain ATCC 700819 / NCTC 11168).